The chain runs to 291 residues: N-acetylmannosamine kinase (291 aa).

ATP-binding positions include 5–12 and 132–139; these read AIDIGGTK and GVGGGVVS. Residues H156, C166, C168, and C173 each coordinate Zn(2+).

This sequence belongs to the ROK (NagC/XylR) family. NanK subfamily. As to quaternary structure, homodimer.

The catalysed reaction is an N-acyl-D-mannosamine + ATP = an N-acyl-D-mannosamine 6-phosphate + ADP + H(+). It participates in amino-sugar metabolism; N-acetylneuraminate degradation; D-fructose 6-phosphate from N-acetylneuraminate: step 2/5. Catalyzes the phosphorylation of N-acetylmannosamine (ManNAc) to ManNAc-6-P. The chain is N-acetylmannosamine kinase from Escherichia coli O9:H4 (strain HS).